The following is a 486-amino-acid chain: Protein nucleotidyltransferase YdiU (486 aa).

ATP-binding residues include Gly90, Gly92, Arg93, Lys113, Asp125, Gly126, Arg176, and Arg183. The active-site Proton acceptor is the Asp252. The Mg(2+) site is built by Asn253 and Asp262. Asp262 lines the ATP pocket.

This sequence belongs to the SELO family. Mg(2+) serves as cofactor. Requires Mn(2+) as cofactor.

It catalyses the reaction L-seryl-[protein] + ATP = 3-O-(5'-adenylyl)-L-seryl-[protein] + diphosphate. The enzyme catalyses L-threonyl-[protein] + ATP = 3-O-(5'-adenylyl)-L-threonyl-[protein] + diphosphate. The catalysed reaction is L-tyrosyl-[protein] + ATP = O-(5'-adenylyl)-L-tyrosyl-[protein] + diphosphate. It carries out the reaction L-histidyl-[protein] + UTP = N(tele)-(5'-uridylyl)-L-histidyl-[protein] + diphosphate. It catalyses the reaction L-seryl-[protein] + UTP = O-(5'-uridylyl)-L-seryl-[protein] + diphosphate. The enzyme catalyses L-tyrosyl-[protein] + UTP = O-(5'-uridylyl)-L-tyrosyl-[protein] + diphosphate. In terms of biological role, nucleotidyltransferase involved in the post-translational modification of proteins. It can catalyze the addition of adenosine monophosphate (AMP) or uridine monophosphate (UMP) to a protein, resulting in modifications known as AMPylation and UMPylation. The polypeptide is Protein nucleotidyltransferase YdiU (Pseudomonas paraeruginosa (strain DSM 24068 / PA7) (Pseudomonas aeruginosa (strain PA7))).